Consider the following 309-residue polypeptide: UDP-N-acetylenolpyruvoylglucosamine reductase (309 aa).

Positions 25-188 (RVGGPADWLF…TSVTLQGNRE (164 aa)) constitute an FAD-binding PCMH-type domain. R168 is an active-site residue. The tract at residues 202–231 (AKRDATQPTKALTAGSTFRNPAGFSSTGQA) is disordered. Residues 207 to 231 (TQPTKALTAGSTFRNPAGFSSTGQA) are compositionally biased toward polar residues. S217 acts as the Proton donor in catalysis. The active site involves E299.

This sequence belongs to the MurB family. The cofactor is FAD.

Its subcellular location is the cytoplasm. It catalyses the reaction UDP-N-acetyl-alpha-D-muramate + NADP(+) = UDP-N-acetyl-3-O-(1-carboxyvinyl)-alpha-D-glucosamine + NADPH + H(+). Its pathway is cell wall biogenesis; peptidoglycan biosynthesis. Functionally, cell wall formation. The sequence is that of UDP-N-acetylenolpyruvoylglucosamine reductase from Jannaschia sp. (strain CCS1).